Here is a 77-residue protein sequence, read N- to C-terminus: UPF0349 protein lin2491 (77 aa).

This sequence belongs to the UPF0349 family.

This is UPF0349 protein lin2491 from Listeria innocua serovar 6a (strain ATCC BAA-680 / CLIP 11262).